Here is a 266-residue protein sequence, read N- to C-terminus: Regulatory protein RecX (266 aa).

The protein belongs to the RecX family.

It localises to the cytoplasm. Modulates RecA activity. In Leuconostoc citreum (strain KM20), this protein is Regulatory protein RecX.